The following is a 701-amino-acid chain: SH3 domain-binding protein 1 (701 aa).

Basic residues predominate over residues 1–10; the sequence is MMKRQLHRMR. Disordered regions lie at residues 1 to 23 and 160 to 182; these read MMKRQLHRMRQLAQTGSLGRTPE and SQATKNSGSSQGLGGSPGSHSHT. The interval 1 to 275 is interaction with CGNL1; that stretch reads MMKRQLHRMR…TATHFPRVYG (275 aa). Residues 17-262 enclose the BAR domain; that stretch reads SLGRTPETAE…RENHGQADHS (246 aa). Phosphoserine occurs at positions 175, 241, 262, and 264. A Rho-GAP domain is found at 276-469; sequence VSLATHLQEL…ALIQSADTLF (194 aa). The tract at residues 470–701 is interaction with CD2AP; sequence PGDINFNVSG…RPRSLASETN (232 aa). The segment at 496–701 is disordered; it reads SEELPSTAVP…RPRSLASETN (206 aa). The span at 508-522 shows a compositional bias: pro residues; the sequence is ATTPAPAPAPAPAPA. Phosphoserine occurs at positions 544 and 550. Pro residues-rich tracts occupy residues 570–579 and 587–596; these read PARPTMPPPQ and PPAPPLPPGS. Thr-601 is modified (phosphothreonine). The SH3-binding motif lies at 616–625; that stretch reads APTVPPPLPP. Composition is skewed to pro residues over residues 618–630 and 641–652; these read TVPPPLPPTPPQP and SPSPASPGPASP. A Phosphothreonine modification is found at Thr-626. Position 653 is a phosphoserine (Ser-653). Low complexity predominate over residues 666-677; it reads GAATAEGGAPEA. Over residues 682-692 the composition is skewed to pro residues; sequence PTPPAIPPQPR.

As to quaternary structure, interacts with RAC1. Interacts with the exocyst via EXOC4 and EXOC8; required for the localization of both SH3BP1 and the exocyst to the leading edge of migrating cells. Interacts with CD2AP and CGNL1; probably part of a complex at cell junctions. Interacts with CAPZA1; recruits CAPZA1 to forming cell junctions. May interact with AFDN. Interacts with PLXND1; they dissociate upon SEMA3E binding to PLXND1 allowing SH3BP1 to transduce downstream signal through RAC1 inactivation. Interacts with ABL1, GRB2 and SRC (via SH3 domain).

Its subcellular location is the cell projection. The protein resides in the cell junction. It is found in the tight junction. The protein localises to the adherens junction. It localises to the phagocytic cup. Its subcellular location is the nucleus. The protein resides in the cytoplasm. It is found in the cytosol. GTPase activating protein (GAP) which specifically converts GTP-bound Rho-type GTPases including RAC1 and CDC42 in their inactive GDP-bound form. By specifically inactivating RAC1 at the leading edge of migrating cells, it regulates the spatiotemporal organization of cell protrusions which is important for proper cell migration. Also negatively regulates CDC42 in the process of actin remodeling and the formation of epithelial cell junctions. Through its GAP activity toward RAC1 and/or CDC42 plays a specific role in phagocytosis of large particles. Specifically recruited by a PI3 kinase/PI3K-dependent mechanism to sites of large particles engagement, inactivates RAC1 and/or CDC42 allowing the reorganization of the underlying actin cytoskeleton required for engulfment. It also plays a role in angiogenesis and the process of repulsive guidance as part of a semaphorin-plexin signaling pathway. Following the binding of PLXND1 to extracellular SEMA3E it dissociates from PLXND1 and inactivates RAC1, inducing the intracellular reorganization of the actin cytoskeleton and the collapse of cells. This chain is SH3 domain-binding protein 1, found in Homo sapiens (Human).